Reading from the N-terminus, the 499-residue chain is Probable cytosol aminopeptidase (499 aa).

Mn(2+) contacts are provided by Lys271 and Asp276. Lys283 is an active-site residue. 3 residues coordinate Mn(2+): Asp294, Asp353, and Glu355. Arg357 is an active-site residue.

This sequence belongs to the peptidase M17 family. The cofactor is Mn(2+).

The protein resides in the cytoplasm. The enzyme catalyses Release of an N-terminal amino acid, Xaa-|-Yaa-, in which Xaa is preferably Leu, but may be other amino acids including Pro although not Arg or Lys, and Yaa may be Pro. Amino acid amides and methyl esters are also readily hydrolyzed, but rates on arylamides are exceedingly low.. The catalysed reaction is Release of an N-terminal amino acid, preferentially leucine, but not glutamic or aspartic acids.. In terms of biological role, presumably involved in the processing and regular turnover of intracellular proteins. Catalyzes the removal of unsubstituted N-terminal amino acids from various peptides. The chain is Probable cytosol aminopeptidase from Bordetella parapertussis (strain 12822 / ATCC BAA-587 / NCTC 13253).